Consider the following 322-residue polypeptide: Transaldolase (322 aa).

Residue Lys-136 is the Schiff-base intermediate with substrate of the active site.

This sequence belongs to the transaldolase family. Type 1 subfamily. As to quaternary structure, homodimer.

The protein localises to the cytoplasm. The enzyme catalyses D-sedoheptulose 7-phosphate + D-glyceraldehyde 3-phosphate = D-erythrose 4-phosphate + beta-D-fructose 6-phosphate. Its pathway is carbohydrate degradation; pentose phosphate pathway; D-glyceraldehyde 3-phosphate and beta-D-fructose 6-phosphate from D-ribose 5-phosphate and D-xylulose 5-phosphate (non-oxidative stage): step 2/3. In terms of biological role, transaldolase is important for the balance of metabolites in the pentose-phosphate pathway. The polypeptide is Transaldolase (Xanthomonas oryzae pv. oryzae (strain PXO99A)).